The sequence spans 152 residues: Dimethylsulfoniopropionate lyase DddW (152 aa).

The region spanning 69 to 124 (IAEFGPGHQLRPHRHTPPEFYLGLEGSGIVTIDGVPHEIRAGVALYIPGDAEHGTV) is the Cupin type-2 domain. Positions 83, 87, 89, and 121 each coordinate Fe cation.

It belongs to the non-heme iron-dependent dioxygenase family. Homodimer. Requires Fe(2+) as cofactor.

The catalysed reaction is S,S-dimethyl-beta-propiothetin = acrylate + dimethyl sulfide + H(+). In terms of biological role, able to cleave dimethylsulfoniopropionate (DMSP), releasing dimethyl sulfide (DMS) and acrylate. DMS is the principal form by which sulfur is transported from oceans to the atmosphere. The chain is Dimethylsulfoniopropionate lyase DddW from Ruegeria pomeroyi (strain ATCC 700808 / DSM 15171 / DSS-3) (Silicibacter pomeroyi).